The following is a 119-amino-acid chain: Large ribosomal subunit protein bL20c (119 aa).

It belongs to the bacterial ribosomal protein bL20 family.

It localises to the plastid. The protein resides in the chloroplast. Its function is as follows. Binds directly to 23S ribosomal RNA and is necessary for the in vitro assembly process of the 50S ribosomal subunit. It is not involved in the protein synthesizing functions of that subunit. The polypeptide is Large ribosomal subunit protein bL20c (Saccharum hybrid (Sugarcane)).